The following is a 359-amino-acid chain: Probable dual-specificity RNA methyltransferase RlmN (359 aa).

Residue glutamate 99 is the Proton acceptor of the active site. The Radical SAM core domain maps to 105–342 (TENRRTACVS…VTIRKSYGTT (238 aa)). Cysteine 112 and cysteine 347 form a disulfide bridge. Positions 119, 123, and 126 each coordinate [4Fe-4S] cluster. S-adenosyl-L-methionine contacts are provided by residues 171-172 (GE), serine 204, 227-229 (SLH), and asparagine 304. The active-site S-methylcysteine intermediate is cysteine 347.

The protein belongs to the radical SAM superfamily. RlmN family. Requires [4Fe-4S] cluster as cofactor.

The protein resides in the cytoplasm. The enzyme catalyses adenosine(2503) in 23S rRNA + 2 reduced [2Fe-2S]-[ferredoxin] + 2 S-adenosyl-L-methionine = 2-methyladenosine(2503) in 23S rRNA + 5'-deoxyadenosine + L-methionine + 2 oxidized [2Fe-2S]-[ferredoxin] + S-adenosyl-L-homocysteine. It catalyses the reaction adenosine(37) in tRNA + 2 reduced [2Fe-2S]-[ferredoxin] + 2 S-adenosyl-L-methionine = 2-methyladenosine(37) in tRNA + 5'-deoxyadenosine + L-methionine + 2 oxidized [2Fe-2S]-[ferredoxin] + S-adenosyl-L-homocysteine. In terms of biological role, specifically methylates position 2 of adenine 2503 in 23S rRNA and position 2 of adenine 37 in tRNAs. This Pelodictyon phaeoclathratiforme (strain DSM 5477 / BU-1) protein is Probable dual-specificity RNA methyltransferase RlmN.